We begin with the raw amino-acid sequence, 88 residues long: ATP synthase subunit c 1 (88 aa).

A run of 2 helical transmembrane segments spans residues 4–24 and 53–73; these read FTWV…GTAI and IGLA…MIIL.

The protein belongs to the ATPase C chain family. As to quaternary structure, F-type ATPases have 2 components, F(1) - the catalytic core - and F(0) - the membrane proton channel. F(1) has five subunits: alpha(3), beta(3), gamma(1), delta(1), epsilon(1). F(0) has three main subunits: a(1), b(2) and c(10-14). The alpha and beta chains form an alternating ring which encloses part of the gamma chain. F(1) is attached to F(0) by a central stalk formed by the gamma and epsilon chains, while a peripheral stalk is formed by the delta and b chains.

It is found in the cell inner membrane. In terms of biological role, f(1)F(0) ATP synthase produces ATP from ADP in the presence of a proton or sodium gradient. F-type ATPases consist of two structural domains, F(1) containing the extramembraneous catalytic core and F(0) containing the membrane proton channel, linked together by a central stalk and a peripheral stalk. During catalysis, ATP synthesis in the catalytic domain of F(1) is coupled via a rotary mechanism of the central stalk subunits to proton translocation. Its function is as follows. Key component of the F(0) channel; it plays a direct role in translocation across the membrane. A homomeric c-ring of between 10-14 subunits forms the central stalk rotor element with the F(1) delta and epsilon subunits. This is ATP synthase subunit c 1 from Syntrophotalea carbinolica (strain DSM 2380 / NBRC 103641 / GraBd1) (Pelobacter carbinolicus).